We begin with the raw amino-acid sequence, 304 residues long: tRNA dimethylallyltransferase (304 aa).

Position 8-15 (8-15 (GPTASGKS)) interacts with ATP. 10–15 (TASGKS) contacts substrate. Residues 33-36 (DSRQ) form an interaction with substrate tRNA region.

It belongs to the IPP transferase family. Monomer. Requires Mg(2+) as cofactor.

It carries out the reaction adenosine(37) in tRNA + dimethylallyl diphosphate = N(6)-dimethylallyladenosine(37) in tRNA + diphosphate. In terms of biological role, catalyzes the transfer of a dimethylallyl group onto the adenine at position 37 in tRNAs that read codons beginning with uridine, leading to the formation of N6-(dimethylallyl)adenosine (i(6)A). The polypeptide is tRNA dimethylallyltransferase (Chlorobium luteolum (strain DSM 273 / BCRC 81028 / 2530) (Pelodictyon luteolum)).